The primary structure comprises 274 residues: Diaminopimelate epimerase (274 aa).

Residues Asn-13, Gln-47, and Asn-65 each contribute to the substrate site. Catalysis depends on Cys-74, which acts as the Proton donor. Residues Gly-75–Asn-76, Asn-149, Asn-182, and Glu-200–Arg-201 contribute to the substrate site. Cys-209 serves as the catalytic Proton acceptor. Gly-210 to Thr-211 contributes to the substrate binding site.

The protein belongs to the diaminopimelate epimerase family. As to quaternary structure, homodimer.

Its subcellular location is the cytoplasm. It catalyses the reaction (2S,6S)-2,6-diaminopimelate = meso-2,6-diaminopimelate. The protein operates within amino-acid biosynthesis; L-lysine biosynthesis via DAP pathway; DL-2,6-diaminopimelate from LL-2,6-diaminopimelate: step 1/1. Catalyzes the stereoinversion of LL-2,6-diaminopimelate (L,L-DAP) to meso-diaminopimelate (meso-DAP), a precursor of L-lysine and an essential component of the bacterial peptidoglycan. The sequence is that of Diaminopimelate epimerase from Rhizorhabdus wittichii (strain DSM 6014 / CCUG 31198 / JCM 15750 / NBRC 105917 / EY 4224 / RW1) (Sphingomonas wittichii).